Consider the following 606-residue polypeptide: Arginine--tRNA ligase (606 aa).

The 'HIGH' region signature appears at 126-136 (PNTNKPLHLGH).

The protein belongs to the class-I aminoacyl-tRNA synthetase family. Monomer.

It is found in the cytoplasm. The enzyme catalyses tRNA(Arg) + L-arginine + ATP = L-arginyl-tRNA(Arg) + AMP + diphosphate. The sequence is that of Arginine--tRNA ligase from Phocaeicola vulgatus (strain ATCC 8482 / DSM 1447 / JCM 5826 / CCUG 4940 / NBRC 14291 / NCTC 11154) (Bacteroides vulgatus).